A 436-amino-acid polypeptide reads, in one-letter code: [Pyruvate dehydrogenase (acetyl-transferring)] kinase isozyme 1, mitochondrial (436 aa).

Residues Met-1 to Phe-28 constitute a mitochondrion transit peptide. Residue Tyr-136 is modified to Phosphotyrosine; by FGFR1. Residues Tyr-163–Ser-393 form the Histidine kinase domain. A Phosphotyrosine; by FGFR1, ABL1, FLT3 and JAK2 modification is found at Tyr-243. Tyr-244 carries the phosphotyrosine; by FGFR1 modification. ATP-binding positions include Glu-279–Arg-286, Asp-318, Ser-337–Thr-338, and Gly-354–Leu-359. A Phosphothreonine modification is found at Thr-338. At Lys-405 the chain carries N6-succinyllysine.

Belongs to the PDK/BCKDK protein kinase family. In terms of assembly, homodimer, and heterodimer with PDK2. Interacts with the pyruvate dehydrogenase complex subunit DLAT, and is part of the multimeric pyruvate dehydrogenase complex that contains multiple copies of pyruvate dehydrogenase (E1), dihydrolipoamide acetyltransferase (DLAT, E2) and lipoamide dehydrogenase (DLD, E3). Interacts with phosphoglycerate kinase PGK1; the interaction is direct, occurs under hypoxic conditions and leads to PDK1-mediated inhibition of pyruvate dehydrogenase complex activity. In terms of processing, phosphorylated by constitutively activated ABL1, FGFR1, FLT3 and JAK2 (in vitro), and this may also occur in cancer cells that express constitutively activated ABL1, FGFR1, FLT3 and JAK2. Phosphorylation at Tyr-243 and Tyr-244 strongly increases kinase activity, while phosphorylation at Tyr-136 has a lesser effect. Phosphorylated under hypoxic conditions at Thr-338 by phosphoglycerate kinase PGK1 which has an activating effect. Expressed predominantly in the heart. Detected at lower levels in liver, skeletal muscle and pancreas.

It localises to the mitochondrion matrix. The catalysed reaction is L-seryl-[pyruvate dehydrogenase E1 alpha subunit] + ATP = O-phospho-L-seryl-[pyruvate dehydrogenase E1 alpha subunit] + ADP + H(+). Its activity is regulated as follows. Activity is enhanced by binding to the pyruvate dehydrogenase subunit DLAT. Inhibited by AZD7545; this compound interferes with DLAT binding and thereby inhibits kinase activity. Inhibited by dichloroacetate and radicicol. Activated under hypoxic conditions by phosphoglycerate kinase PGK1-mediated phosphorylation at Thr-338. Functionally, kinase that plays a key role in regulation of glucose and fatty acid metabolism and homeostasis via phosphorylation of the pyruvate dehydrogenase subunits PDHA1 and PDHA2. This inhibits pyruvate dehydrogenase activity, and thereby regulates metabolite flux through the tricarboxylic acid cycle, down-regulates aerobic respiration and inhibits the formation of acetyl-coenzyme A from pyruvate. Plays an important role in cellular responses to hypoxia and is important for cell proliferation under hypoxia. The protein is [Pyruvate dehydrogenase (acetyl-transferring)] kinase isozyme 1, mitochondrial (PDK1) of Homo sapiens (Human).